A 277-amino-acid chain; its full sequence is Shikimate dehydrogenase (NADP(+)) (277 aa).

Shikimate-binding positions include 17–19 (SRS) and Thr64. The active-site Proton acceptor is Lys68. 2 residues coordinate shikimate: Asn88 and Asp103. Residues 128–132 (GAGGS) and Leu217 each bind NADP(+). Residue Tyr219 coordinates shikimate. Gly240 contacts NADP(+).

The protein belongs to the shikimate dehydrogenase family. Homodimer.

The catalysed reaction is shikimate + NADP(+) = 3-dehydroshikimate + NADPH + H(+). It participates in metabolic intermediate biosynthesis; chorismate biosynthesis; chorismate from D-erythrose 4-phosphate and phosphoenolpyruvate: step 4/7. Functionally, involved in the biosynthesis of the chorismate, which leads to the biosynthesis of aromatic amino acids. Catalyzes the reversible NADPH linked reduction of 3-dehydroshikimate (DHSA) to yield shikimate (SA). This chain is Shikimate dehydrogenase (NADP(+)), found in Afipia carboxidovorans (strain ATCC 49405 / DSM 1227 / KCTC 32145 / OM5) (Oligotropha carboxidovorans).